Here is a 165-residue protein sequence, read N- to C-terminus: Nucleotide-binding protein P9515_05441 (165 aa).

Belongs to the YajQ family.

Its function is as follows. Nucleotide-binding protein. The protein is Nucleotide-binding protein P9515_05441 of Prochlorococcus marinus (strain MIT 9515).